We begin with the raw amino-acid sequence, 660 residues long: Arginine--tRNA ligase, cytoplasmic (660 aa).

The segment at 1 to 72 (MELPVCFYEE…LEEKKKSSKS (72 aa)) is could be involved in the assembly of the multisynthetase complex. Residues 200–202 (SPN), His-211, Tyr-384, Asp-388, and Gln-412 contribute to the L-arginine site. The 'HIGH' region signature appears at 201-212 (PNIAKEMHVGHL). Positions 529–543 (NTAAYLLYAYTRIRS) are interaction with tRNA.

This sequence belongs to the class-I aminoacyl-tRNA synthetase family. In terms of assembly, monomer; also part of a multisubunit complex that groups tRNA ligases for Arg, Asp, Glu, Gln, Ile, Leu, Lys, Met and Pro.

It is found in the cytoplasm. The protein localises to the cytosol. The enzyme catalyses tRNA(Arg) + L-arginine + ATP = L-arginyl-tRNA(Arg) + AMP + diphosphate. Its function is as follows. Forms part of a macromolecular complex that catalyzes the attachment of specific amino acids to cognate tRNAs during protein synthesis. In Xenopus tropicalis (Western clawed frog), this protein is Arginine--tRNA ligase, cytoplasmic (rars1).